We begin with the raw amino-acid sequence, 151 residues long: 3-hydroxyacyl-thioester dehydratase Z (151 aa).

One can recognise a MaoC-like domain in the interval 11–131 (AAAAGEKVGQ…TVQATVSTTV (121 aa)). Substrate contacts are provided by residues 60-63 (IAHG), 86-89 (AINY), 97-99 (PAP), Gln124, and Arg148.

The protein belongs to the enoyl-CoA hydratase/isomerase family. As to quaternary structure, homodimer.

The enzyme catalyses a (3R)-3-hydroxyacyl-CoA = a (2E)-enoyl-CoA + H2O. Functionally, shows trans-enoyl-CoA hydratase/3-hydroxyacyl-CoA dehydratase activity. This chain is 3-hydroxyacyl-thioester dehydratase Z, found in Mycobacterium bovis (strain ATCC BAA-935 / AF2122/97).